We begin with the raw amino-acid sequence, 230 residues long: Ribonuclease 3 (230 aa).

The RNase III domain occupies 10–133; the sequence is DPRLLSRIGY…IIGAIYLDSS (124 aa). Position 46 (Glu46) interacts with Mg(2+). Residue Asp50 is part of the active site. 2 residues coordinate Mg(2+): Asp119 and Glu122. Glu122 is a catalytic residue. Positions 161–230 constitute a DRBM domain; it reads DPKSRLQEYL…AAEILKLLEQ (70 aa).

The protein belongs to the ribonuclease III family. In terms of assembly, homodimer. Requires Mg(2+) as cofactor.

The protein localises to the cytoplasm. The enzyme catalyses Endonucleolytic cleavage to 5'-phosphomonoester.. Its function is as follows. Digests double-stranded RNA. Involved in the processing of primary rRNA transcript to yield the immediate precursors to the large and small rRNAs (23S and 16S). Processes some mRNAs, and tRNAs when they are encoded in the rRNA operon. Processes pre-crRNA and tracrRNA of type II CRISPR loci if present in the organism. The polypeptide is Ribonuclease 3 (Acinetobacter baumannii (strain SDF)).